The following is a 169-amino-acid chain: Thaumatin-like pathogenesis-related protein 3 (169 aa).

The signal sequence occupies residues M1–A21.

The protein belongs to the thaumatin family.

In terms of biological role, associated with resistance against stem rust fungi. The protein is Thaumatin-like pathogenesis-related protein 3 (RASTL-3) of Avena sativa (Oat).